The following is a 917-amino-acid chain: MATNFLTKIFGSRNDRLLKQYRKTVARINAMEPDYEKLSDEALRGKTQEFKDRIAQGESLDALLPEAFAVVREGSKRIMKMRHFDVQLVGGMALHYGKIAEMRTGEGKTLTATLPVYLNALSGQGVHVVTVNDYLAGRDAQWMGRLYNFLGLTVGINLPQMPREEKQAAYQADITYGTNNEYGFDYLRDNMVYDARERVQRGLNYAIVDEVDSILIDEARTPLIISGQAEDHTALYVAMNKVVPLLVRQEGEADPRTGEGVTKPGDFTLDEKTHQVFLTEQGHENAERILASQGLIPEGASLYDPANITLVHHLYAALRANHLYHRDQHYVVQNGEIVIVDEFTGRLMAGRRWSEGLHQAVEAKEGVNIQAENQTLASITFQNYFRLYNKLSGMTGTADTEAYEFQEIYGLETVVIPPNRPSKRDDQLDRVYKTTREKYEAAIADIRECHERGQPVLVGTTSIENSEIIAELLNKAGLPHQVLNAKQHAREADIVAQAGRPGMITIATNMAGRGTDIVLGGNVEKAIAALEADESLSEADRAARVQELRAQWKLDHEKVTALGGLRIIATERHESRRIDNQLRGRSGRQGDPGSSRFYLSLDDQLMRIFAGDRVKAIMDRLKMPDGEAIEAGIVTRSIESAQRKVEARNFDIRKQLLEYDDVANDQRKVIYQQRNEILDAPDLGVLIDAMRDDCLADVVRQYVPAESVEEQWDLAGLEKALASDWQVSLALQKEVEGSDAITDEEILEKVQQAAREAFQAKVGQVGAENFTQFERMVLLQNFDTNWRDHLSALDYLRQGIHLRGYAQKQPKQEYKREAFELFRQLIDQVKNEVTRLMMTVQVQSSAQLDEATQAMEDRGEGISNVTYSSPTETGEVETVADAATAAQPAAAGVRVGRNDPCPCGSGKKYKQCHGKLA.

ATP-binding positions include Gln87, Gly105–Thr109, and Asp516. Residues Cys901, Cys903, Cys912, and His913 each contribute to the Zn(2+) site.

This sequence belongs to the SecA family. In terms of assembly, monomer and homodimer. Part of the essential Sec protein translocation apparatus which comprises SecA, SecYEG and auxiliary proteins SecDF-YajC and YidC. Requires Zn(2+) as cofactor.

The protein resides in the cell inner membrane. It is found in the cytoplasm. It catalyses the reaction ATP + H2O + cellular proteinSide 1 = ADP + phosphate + cellular proteinSide 2.. Functionally, part of the Sec protein translocase complex. Interacts with the SecYEG preprotein conducting channel. Has a central role in coupling the hydrolysis of ATP to the transfer of proteins into and across the cell membrane, serving both as a receptor for the preprotein-SecB complex and as an ATP-driven molecular motor driving the stepwise translocation of polypeptide chains across the membrane. The protein is Protein translocase subunit SecA of Acidovorax sp. (strain JS42).